A 242-amino-acid chain; its full sequence is Outer membrane protein class 4 (242 aa).

An N-terminal signal peptide occupies residues 1 to 22 (MTKQLKLSALFVALLASGTAVA). Tandem repeats lie at residues 69–70 (AP), 71–72 (EP), 73–74 (EP), 75–76 (EP), 77–78 (EP), 79–80 (AP), and 81–82 (AP). The tract at residues 69 to 82 (APEPEPEPEPAPAP) is 7 X 2 AA tandem repeats of X-P. The 138-residue stretch at 92-229 (YVDETISLSA…RVDVKIRSIV (138 aa)) folds into the OmpA-like domain. The cysteines at positions 191 and 214 are disulfide-linked.

This sequence belongs to the outer membrane OOP (TC 1.B.6) superfamily. The C-terminus exists in a monomer-dimer equilibrium.

It is found in the cell outer membrane. In Neisseria meningitidis serogroup B (strain ATCC BAA-335 / MC58), this protein is Outer membrane protein class 4.